A 151-amino-acid chain; its full sequence is FAD synthase (151 aa).

Residues 12–13 (TF), 17–20 (HPGH), D97, and Y125 contribute to the ATP site.

The protein belongs to the archaeal FAD synthase family. Homodimer. The cofactor is a divalent metal cation.

It catalyses the reaction FMN + ATP + H(+) = FAD + diphosphate. The protein operates within cofactor biosynthesis; FAD biosynthesis; FAD from FMN: step 1/1. Catalyzes the transfer of the AMP portion of ATP to flavin mononucleotide (FMN) to produce flavin adenine dinucleotide (FAD) coenzyme. The chain is FAD synthase from Methanococcus vannielii (strain ATCC 35089 / DSM 1224 / JCM 13029 / OCM 148 / SB).